We begin with the raw amino-acid sequence, 134 residues long: Lymphocyte antigen 6A-2/6E-1 (134 aa).

The N-terminal stretch at 1–26 (MDTSHTTKSCLLILLVALLCAERAQG) is a signal peptide. Residues 27–119 (LECYQCYGVP…NGGSTWTMAG (93 aa)) form the UPAR/Ly6 domain. 5 cysteine pairs are disulfide-bonded: Cys29–Cys53, Cys32–Cys41, Cys46–Cys74, Cys78–Cys98, and Cys99–Cys104. Gly112 is lipidated: GPI-anchor amidated glycine. Residues 113-134 (STWTMAGVLLFSLSSVLLQTLL) constitute a propeptide, removed in mature form.

In terms of processing, O-glycosylated. Not N-glycosylated. Post-translationally, not phosphorylated. As to expression, widely expressed.

It localises to the cell membrane. Its function is as follows. T-cell activation. This is Lymphocyte antigen 6A-2/6E-1 (Ly6a) from Mus musculus (Mouse).